The following is a 221-amino-acid chain: Pleckstrin homology domain-containing family B member 2 (221 aa).

Residues 2-109 enclose the PH domain; sequence AFVKSGWLLR…WKFTLQDSRT (108 aa). Lysine 20 is a binding site for a 1,2-diacyl-sn-glycero-3-phospho-L-serine.

In terms of tissue distribution, highly expressed in brain, retina, heart and kidney. Detected at lower levels in lung, muscle and nerve.

Its subcellular location is the recycling endosome membrane. In terms of biological role, involved in retrograde transport of recycling endosomes. The sequence is that of Pleckstrin homology domain-containing family B member 2 (Plekhb2) from Mus musculus (Mouse).